The chain runs to 223 residues: Phage shock protein A homolog (223 aa).

Positions Ile-29–Met-185 form a coiled coil.

The protein belongs to the PspA/Vipp/IM30 family.

In Deinococcus radiodurans (strain ATCC 13939 / DSM 20539 / JCM 16871 / CCUG 27074 / LMG 4051 / NBRC 15346 / NCIMB 9279 / VKM B-1422 / R1), this protein is Phage shock protein A homolog.